Reading from the N-terminus, the 421-residue chain is Diaminobutyrate--2-oxoglutarate transaminase (421 aa).

The residue at position 267 (Lys-267) is an N6-(pyridoxal phosphate)lysine.

This sequence belongs to the class-III pyridoxal-phosphate-dependent aminotransferase family. As to quaternary structure, homohexamer. Pyridoxal 5'-phosphate serves as cofactor.

It catalyses the reaction L-2,4-diaminobutanoate + 2-oxoglutarate = L-aspartate 4-semialdehyde + L-glutamate. Its pathway is amine and polyamine biosynthesis; ectoine biosynthesis; L-ectoine from L-aspartate 4-semialdehyde: step 1/3. In terms of biological role, catalyzes reversively the conversion of L-aspartate beta-semialdehyde (ASA) to L-2,4-diaminobutyrate (DABA) by transamination with L-glutamate. Seems to use L-glutamate specifically as the amino group donor to ASA, as it is not active with L-alanine, L-glutamine, L-aspartate and L-lysine, and is only poorly active with L-homoserine. In the reverse reaction, gamma-aminobutyric acid (GABA) and L-ornithine can also be used as amino group donors to 2-oxoglutarate, but with a reduced activity compared to that with DABA. This Halomonas elongata (strain ATCC 33173 / DSM 2581 / NBRC 15536 / NCIMB 2198 / 1H9) protein is Diaminobutyrate--2-oxoglutarate transaminase (ectB).